Consider the following 226-residue polypeptide: Glycerol-3-phosphate acyltransferase (226 aa).

6 consecutive transmembrane segments (helical) span residues 1-21, 60-80, 102-122, 134-154, 159-178, and 182-197; these read MGFW…LGSF, FVLG…YYLF, LVTL…FLGF, ILLA…AVVV, IVSL…MVFL, and LPYI…YVIL.

The protein belongs to the PlsY family. In terms of assembly, probably interacts with PlsX.

It is found in the cell inner membrane. The enzyme catalyses an acyl phosphate + sn-glycerol 3-phosphate = a 1-acyl-sn-glycero-3-phosphate + phosphate. The protein operates within lipid metabolism; phospholipid metabolism. In terms of biological role, catalyzes the transfer of an acyl group from acyl-phosphate (acyl-PO(4)) to glycerol-3-phosphate (G3P) to form lysophosphatidic acid (LPA). This enzyme utilizes acyl-phosphate as fatty acyl donor, but not acyl-CoA or acyl-ACP. The chain is Glycerol-3-phosphate acyltransferase from Nostoc sp. (strain PCC 7120 / SAG 25.82 / UTEX 2576).